A 169-amino-acid chain; its full sequence is Cell cycle link protein (169 aa).

Residues 9–22 (LPLELREKIVRDHL) are binding to host SKP1 protein. The LXCXE motif, interaction with host RBR motif lies at 110–114 (LSCGE).

The protein belongs to the nanovirus Clink protein family. In terms of assembly, interacts with host SKP1. Interacts (via LXCXE domain) with host retinoblastoma-related protein 1 (RBR1). Interacts (via LXCXE domain) with retinoblastoma-related proteins (RBR).

In terms of biological role, interacts with and disrupts the function of host retinoblastoma-related proteins RBR, which are key regulators of the cell cycle. Induces transcriptional activation of E2F-regulated S-phase and G2/M-phase-specific genes. Inactivation of the ability of RBR to arrest the cell cycle leads to the stimulation of viral DNA replication. In Astragalus sinicus (Chinese milk vetch), this protein is Cell cycle link protein (DNA-C).